Reading from the N-terminus, the 62-residue chain is Potassium channel toxin kappa-KTx 3.2 (62 aa).

The first 26 residues, 1-26 (MKSTLMTASLLILVLLSIVDYASVYA), serve as a signal peptide directing secretion. A propeptide spanning residues 27 to 36 (ELIDSEISME) is cleaved from the precursor. 2 cysteine pairs are disulfide-bonded: C43/C61 and C47/C57.

This sequence belongs to the short scorpion toxin superfamily. Potassium channel inhibitor kappa-KTx family. Kappa-KTx 3 subfamily. Expressed by the venom gland.

It localises to the secreted. In terms of biological role, potassium channel inhibitor (Kv). In Heterometrus petersii (Asian forest scorpion), this protein is Potassium channel toxin kappa-KTx 3.2.